The primary structure comprises 126 residues: H2B.U histone 2 (126 aa).

Residues 1 to 35 (MPEPSRSTPAPKKGSKKAITKAQKKDGKKRKRGRK) form a disordered region. The residue at position 2 (P2) is an N-acetylproline. At E3 the chain carries ADP-ribosyl glutamic acid. S7 is subject to ADP-ribosylserine. At K12 the chain carries N6-(beta-hydroxybutyryl)lysine; alternate. N6-acetyllysine; alternate occurs at positions 12 and 13. N6-crotonyllysine; alternate is present on residues K12 and K13. At K12 the chain carries N6-lactoyllysine; alternate. K13 is modified (N6-(2-hydroxyisobutyryl)lysine; alternate). S15 is subject to Phosphoserine; by STK4/MST1. 4 positions are modified to N6-acetyllysine; alternate: K16, K17, K21, and K24. Residues K16, K17, K21, and K24 each carry the N6-crotonyllysine; alternate modification. Residues K16, K17, K21, and K24 each carry the N6-lactoyllysine; alternate modification. K17 bears the N6-glutaryllysine; alternate mark. At K21 the chain carries N6-(beta-hydroxybutyryl)lysine; alternate. An N6-(2-hydroxyisobutyryl)lysine; alternate mark is found at K21 and K24. Residue K21 is modified to N6-butyryllysine; alternate. Residue K21 forms a Glycyl lysine isopeptide (Lys-Gly) (interchain with G-Cter in SUMO2); alternate linkage. K25 is subject to N6-(2-hydroxyisobutyryl)lysine. K35 carries the post-translational modification N6-(beta-hydroxybutyryl)lysine; alternate. Residue K35 is modified to N6-crotonyllysine; alternate. Position 35 is an N6-(2-hydroxyisobutyryl)lysine; alternate (K35). Residue K35 is modified to N6-glutaryllysine; alternate. N6-succinyllysine; alternate is present on K35. K35 is covalently cross-linked (Glycyl lysine isopeptide (Lys-Gly) (interchain with G-Cter in ubiquitin); alternate). Residue E36 is modified to PolyADP-ribosyl glutamic acid. A Phosphoserine; by AMPK modification is found at S37. K44 bears the N6-lactoyllysine; alternate mark. N6-(2-hydroxyisobutyryl)lysine; alternate occurs at positions 44, 47, and 58. N6-glutaryllysine; alternate is present on residues K44 and K47. K47 carries the N6-methyllysine; alternate modification. At K58 the chain carries N6,N6-dimethyllysine; alternate. A Dimethylated arginine modification is found at R80. Residue K86 is modified to N6-acetyllysine; alternate. Position 86 is an N6-lactoyllysine; alternate (K86). Residue K86 is modified to N6-(2-hydroxyisobutyryl)lysine; alternate. K86 is modified (N6,N6,N6-trimethyllysine; alternate). An omega-N-methylarginine mark is found at R87 and R93. An N6-(beta-hydroxybutyryl)lysine; alternate modification is found at K109. K109 is modified (N6-lactoyllysine; alternate). K109 carries the N6-(2-hydroxyisobutyryl)lysine; alternate modification. K109 is modified (N6-glutaryllysine; alternate). K109 carries the N6-methyllysine; alternate modification. S113 is a glycosylation site (O-linked (GlcNAc) serine). Position 116 is a phosphothreonine (T116). K117 carries the N6-(beta-hydroxybutyryl)lysine; alternate modification. Residues K117 and K121 each carry the N6-lactoyllysine; alternate modification. K117 and K121 each carry N6-(2-hydroxyisobutyryl)lysine; alternate. An N6-glutaryllysine; alternate mark is found at K117 and K121. N6-succinyllysine; alternate occurs at positions 117 and 121. K117 is modified (N6-methylated lysine; alternate). A Glycyl lysine isopeptide (Lys-Gly) (interchain with G-Cter in ubiquitin); alternate cross-link involves residue K121.

It belongs to the histone H2B family. As to quaternary structure, the nucleosome is a histone octamer containing two molecules each of H2A, H2B, H3 and H4 assembled in one H3-H4 heterotetramer and two H2A-H2B heterodimers. The octamer wraps approximately 147 bp of DNA. In terms of processing, monoubiquitination at Lys-35 (H2BK34Ub) by the MSL1/MSL2 dimer is required for histone H3 'Lys-4' (H3K4me) and 'Lys-79' (H3K79me) methylation and transcription activation at specific gene loci, such as HOXA9 and MEIS1 loci. Similarly, monoubiquitination at Lys-121 (H2BK120Ub) by the RNF20/40 complex gives a specific tag for epigenetic transcriptional activation and is also prerequisite for histone H3 'Lys-4' and 'Lys-79' methylation. It also functions cooperatively with the FACT dimer to stimulate elongation by RNA polymerase II. H2BK120Ub also acts as a regulator of mRNA splicing: deubiquitination by USP49 is required for efficient cotranscriptional splicing of a large set of exons. Post-translationally, phosphorylated on Ser-15 (H2BS14ph) by STK4/MST1 during apoptosis; which facilitates apoptotic chromatin condensation. Also phosphorylated on Ser-15 in response to DNA double strand breaks (DSBs), and in correlation with somatic hypermutation and immunoglobulin class-switch recombination. Phosphorylation at Ser-37 (H2BS36ph) by AMPK in response to stress promotes transcription. GlcNAcylation at Ser-113 promotes monoubiquitination of Lys-121. It fluctuates in response to extracellular glucose, and associates with transcribed genes. In terms of processing, ADP-ribosylated by PARP1 or PARP2 on Ser-7 (H2BS6ADPr) in response to DNA damage. H2BS6ADPr promotes recruitment of CHD1L. Mono-ADP-ribosylated on Glu-3 (H2BE2ADPr) by PARP3 in response to single-strand breaks. Poly ADP-ribosylation on Glu-36 (H2BE35ADPr) by PARP1 regulates adipogenesis: it inhibits phosphorylation at Ser-37 (H2BS36ph), thereby blocking expression of pro-adipogenetic genes. Post-translationally, crotonylation (Kcr) is specifically present in male germ cells and marks testis-specific genes in post-meiotic cells, including X-linked genes that escape sex chromosome inactivation in haploid cells. Crotonylation marks active promoters and enhancers and confers resistance to transcriptional repressors. It is also associated with post-meiotically activated genes on autosomes. Hydroxybutyrylation of histones is induced by starvation. In terms of processing, lactylated in macrophages by EP300/P300 by using lactoyl-CoA directly derived from endogenous or exogenous lactate, leading to stimulates gene transcription.

It localises to the nucleus. Its subcellular location is the chromosome. Core component of nucleosome. Nucleosomes wrap and compact DNA into chromatin, limiting DNA accessibility to the cellular machineries which require DNA as a template. Histones thereby play a central role in transcription regulation, DNA repair, DNA replication and chromosomal stability. DNA accessibility is regulated via a complex set of post-translational modifications of histones, also called histone code, and nucleosome remodeling. In Mus musculus (Mouse), this protein is H2B.U histone 2.